The chain runs to 487 residues: Glutamate--tRNA ligase (487 aa).

Residues 11–21 (PSPTGYPHLGN) carry the 'HIGH' region motif. Residues Cys108, Cys110, Cys135, and Asp137 each contribute to the Zn(2+) site. The 'KMSKS' region motif lies at 245–249 (KLSKR). Lys248 contributes to the ATP binding site.

The protein belongs to the class-I aminoacyl-tRNA synthetase family. Glutamate--tRNA ligase type 1 subfamily. As to quaternary structure, monomer. Requires Zn(2+) as cofactor.

The protein localises to the cytoplasm. The enzyme catalyses tRNA(Glu) + L-glutamate + ATP = L-glutamyl-tRNA(Glu) + AMP + diphosphate. In terms of biological role, catalyzes the attachment of glutamate to tRNA(Glu) in a two-step reaction: glutamate is first activated by ATP to form Glu-AMP and then transferred to the acceptor end of tRNA(Glu). This Dehalococcoides mccartyi (strain ATCC BAA-2100 / JCM 16839 / KCTC 5957 / BAV1) protein is Glutamate--tRNA ligase.